Consider the following 57-residue polypeptide: Large ribosomal subunit protein uL30 (57 aa).

Belongs to the universal ribosomal protein uL30 family. In terms of assembly, part of the 50S ribosomal subunit.

This is Large ribosomal subunit protein uL30 from Clostridium acetobutylicum (strain ATCC 824 / DSM 792 / JCM 1419 / IAM 19013 / LMG 5710 / NBRC 13948 / NRRL B-527 / VKM B-1787 / 2291 / W).